The primary structure comprises 369 residues: Cytokine receptor common subunit gamma (369 aa).

A signal peptide spans 1-22 (MLKPSLPFTSLLFLQLPLLGVG). Residues 23 to 262 (LNTTILTPNG…ENPFLFALEA (240 aa)) are Extracellular-facing. N-linked (GlcNAc...) asparagine glycans are attached at residues Asn-24, Asn-71, Asn-75, and Asn-84. Cys-62 and Cys-72 are joined by a disulfide. The cysteines at positions 102 and 115 are disulfide-linked. A Fibronectin type-III domain is found at 156-253 (APENLTLHKL…IHWGSNTSKE (98 aa)). Asn-159 is a glycosylation site (N-linked (GlcNAc...) asparagine). Cys-182 and Cys-231 are oxidised to a cystine. Residues 237–241 (WSEWS) carry the WSXWS motif motif. Asn-249 carries an N-linked (GlcNAc...) asparagine glycan. A helical membrane pass occupies residues 263–283 (VVISVGSMGLIISLLCVYFWL). The Cytoplasmic portion of the chain corresponds to 284 to 369 (ERTMPRIPTL…PPCYTLKPET (86 aa)). The Box 1 motif motif lies at 286-294 (TMPRIPTLK). Position 292 is a phosphothreonine (Thr-292).

The protein belongs to the type I cytokine receptor family. Type 5 subfamily. In terms of assembly, the gamma subunit is common to the IL2, IL4, IL7, IL15, IL21 and probably also the IL13 receptors. Interacts with SHB upon interleukin stimulation. Interacts with IL9. As to quaternary structure, (Microbial infection) Interacts with HTLV-1 accessory protein p12I.

Its subcellular location is the cell membrane. It is found in the cell surface. Common subunit for the receptors for a variety of interleukins. Probably in association with IL15RA, involved in the stimulation of neutrophil phagocytosis by IL15. This chain is Cytokine receptor common subunit gamma (IL2RG), found in Homo sapiens (Human).